The chain runs to 219 residues: Guanylate kinase (219 aa).

Residues 15-194 (GLMFVLSSPS…AFAEVQSILK (180 aa)) enclose the Guanylate kinase-like domain. 22–29 (SPSGAGKT) is a binding site for ATP.

This sequence belongs to the guanylate kinase family.

The protein resides in the cytoplasm. It carries out the reaction GMP + ATP = GDP + ADP. Functionally, essential for recycling GMP and indirectly, cGMP. The protein is Guanylate kinase of Bradyrhizobium diazoefficiens (strain JCM 10833 / BCRC 13528 / IAM 13628 / NBRC 14792 / USDA 110).